The sequence spans 308 residues: MHPTRSFQGLILTLHNYWAEHGCAILQPYDMEVGAGTFHPATTLRSLGPKPWKAAYVQPSRRPKDGRYGENPNRLQHYYQYQVLIKPSPPNLQDLYLGSLKAIGLDPTLHDVRFVEDDWESPTLGAWGLGWECWCDGMEVSQFTYFQQVCGIECSPVAGELTYGLERLAMYVQGVDNVYDLNFNGLEGDEKVTYGDVFLQAEQEYSRYNFEMANTETLHQHFIDAERECEAILKAGSTGENSLHKCVFPAYDQCIKASHVFNLMDARGVISVTERQGYILRVRNLARQCGEAFLLTDAGGFNFKREGE.

The protein belongs to the class-II aminoacyl-tRNA synthetase family. As to quaternary structure, tetramer of two alpha and two beta subunits.

The protein resides in the cytoplasm. The enzyme catalyses tRNA(Gly) + glycine + ATP = glycyl-tRNA(Gly) + AMP + diphosphate. The sequence is that of Glycine--tRNA ligase alpha subunit from Brucella abortus (strain 2308).